A 305-amino-acid chain; its full sequence is Tyrosine recombinase XerD (305 aa).

The Core-binding (CB) domain maps to 2–87; sequence SQGEAWADAF…AVRQFYRFVL (86 aa). Positions 108 to 295 constitute a Tyr recombinase domain; that stretch reads PLPKVLERDE…AGEHLAHIVQ (188 aa). Catalysis depends on residues R149, K173, H247, R250, and H273. Y282 (O-(3'-phospho-DNA)-tyrosine intermediate) is an active-site residue.

It belongs to the 'phage' integrase family. XerD subfamily. As to quaternary structure, forms a cyclic heterotetrameric complex composed of two molecules of XerC and two molecules of XerD.

It localises to the cytoplasm. Functionally, site-specific tyrosine recombinase, which acts by catalyzing the cutting and rejoining of the recombining DNA molecules. The XerC-XerD complex is essential to convert dimers of the bacterial chromosome into monomers to permit their segregation at cell division. It also contributes to the segregational stability of plasmids. This Caulobacter vibrioides (strain ATCC 19089 / CIP 103742 / CB 15) (Caulobacter crescentus) protein is Tyrosine recombinase XerD.